We begin with the raw amino-acid sequence, 99 residues long: NADH-quinone oxidoreductase subunit K 1 (99 aa).

3 helical membrane passes run 3-23 (PVNY…GVLV), 28-48 (IVVF…LVTF), and 59-79 (IVAF…LAII).

It belongs to the complex I subunit 4L family. NDH-1 is composed of 14 different subunits. Subunits NuoA, H, J, K, L, M, N constitute the membrane sector of the complex.

The protein localises to the cell membrane. It carries out the reaction a quinone + NADH + 5 H(+)(in) = a quinol + NAD(+) + 4 H(+)(out). In terms of biological role, NDH-1 shuttles electrons from NADH, via FMN and iron-sulfur (Fe-S) centers, to quinones in the respiratory chain. The immediate electron acceptor for the enzyme in this species is believed to be a menaquinone. Couples the redox reaction to proton translocation (for every two electrons transferred, four hydrogen ions are translocated across the cytoplasmic membrane), and thus conserves the redox energy in a proton gradient. The sequence is that of NADH-quinone oxidoreductase subunit K 1 from Streptomyces griseus subsp. griseus (strain JCM 4626 / CBS 651.72 / NBRC 13350 / KCC S-0626 / ISP 5235).